The primary structure comprises 100 residues: Small ribosomal subunit protein uS14c (100 aa).

This sequence belongs to the universal ribosomal protein uS14 family. In terms of assembly, part of the 30S ribosomal subunit.

Its subcellular location is the plastid. The protein resides in the chloroplast. Functionally, binds 16S rRNA, required for the assembly of 30S particles. The polypeptide is Small ribosomal subunit protein uS14c (Mesostigma viride (Green alga)).